A 70-amino-acid chain; its full sequence is MLKFLNLTSTSLVLTSAYNVQNIYLAELLISNRIQFHKRLHQQRTAHKVTSPPSQRPQNSETKSDSQNRS.

Residues 40–70 (LHQQRTAHKVTSPPSQRPQNSETKSDSQNRS) are disordered. Positions 51–61 (SPPSQRPQNSE) are enriched in polar residues.

This is an uncharacterized protein from Bdellovibrio phage phiMH2K (Bacteriophage phiMH2K).